The primary structure comprises 26 residues: Melittin (26 aa).

Gly-1 is subject to N-formylglycine; partial. Position 26 is a glutamine amide (Gln-26).

The protein belongs to the melittin family. In terms of assembly, monomer (in solution and for integration into membranes), homotetramer (in solution and potentially as a toroidal pore in membranes), and potenially homomultimer (as a toroidal pore in membranes). In terms of tissue distribution, expressed by the venom gland.

It is found in the secreted. The protein localises to the target cell membrane. In terms of biological role, main toxin of bee venom with strong hemolytic activity and antimicrobial activity. It has enhancing effects on bee venom phospholipase A2 activity. This amphipathic toxin binds to negatively charged membrane surface and forms pore by inserting into lipid bilayers inducing the leakage of ions and molecules and the enhancement of permeability that ultimately leads to cell lysis. It acts as a voltage-gated pore with higher selectivity for anions over cations. The ion conductance has been shown to be voltage-dependent. Self-association of melittin in membranes is promoted by high ionic strength, but not by the presence of negatively charged lipids. In vivo, intradermal injection into healthy human volunteers produce sharp pain sensation and an inflammatory response. It produces pain by activating primary nociceptor cells directly and indirectly due to its ability to activate plasma membrane phospholipase A2 and its pore-forming activity. In Apis florea (Dwarf honeybee), this protein is Melittin (MELT).